The sequence spans 147 residues: Ubiquitin-conjugating enzyme E2 D2B (147 aa).

The region spanning 1–147 (MALKRIHKEL…AREWTQKYAM (147 aa)) is the UBC core domain. Cys-85 functions as the Glycyl thioester intermediate in the catalytic mechanism.

This sequence belongs to the ubiquitin-conjugating enzyme family. As to quaternary structure, interacts with CNOT4 (via RING domain). As to expression, testis-specific. Mainly expressed in the round spermatids (at protein level).

The enzyme catalyses S-ubiquitinyl-[E1 ubiquitin-activating enzyme]-L-cysteine + [E2 ubiquitin-conjugating enzyme]-L-cysteine = [E1 ubiquitin-activating enzyme]-L-cysteine + S-ubiquitinyl-[E2 ubiquitin-conjugating enzyme]-L-cysteine.. It participates in protein modification; protein ubiquitination. Functionally, catalyzes the covalent attachment of ubiquitin to other proteins. Mediates the selective degradation of short-lived and abnormal proteins. Functions in the E6/E6-AP-induced ubiquitination of p53/TP53. Mediates ubiquitination of PEX5 and SQSTM1 and autoubiquitination of STUB1 and TRAF6. Involved in the signal-induced conjugation and subsequent degradation of NFKBIA, FBXW2-mediated GCM1 ubiquitination and degradation, MDM2-dependent degradation of p53/TP53 and the activation of MAVS in the mitochondria by RIGI in response to viral infection Plays a role in early maturation of the testis. In Rattus norvegicus (Rat), this protein is Ubiquitin-conjugating enzyme E2 D2B (Ube2d2b).